The sequence spans 284 residues: Bifunctional protein FolD (284 aa).

Residues 164–166 and Ser189 contribute to the NADP(+) site; that span reads GRS.

Belongs to the tetrahydrofolate dehydrogenase/cyclohydrolase family. As to quaternary structure, homodimer.

The enzyme catalyses (6R)-5,10-methylene-5,6,7,8-tetrahydrofolate + NADP(+) = (6R)-5,10-methenyltetrahydrofolate + NADPH. The catalysed reaction is (6R)-5,10-methenyltetrahydrofolate + H2O = (6R)-10-formyltetrahydrofolate + H(+). The protein operates within one-carbon metabolism; tetrahydrofolate interconversion. In terms of biological role, catalyzes the oxidation of 5,10-methylenetetrahydrofolate to 5,10-methenyltetrahydrofolate and then the hydrolysis of 5,10-methenyltetrahydrofolate to 10-formyltetrahydrofolate. The chain is Bifunctional protein FolD from Listeria welshimeri serovar 6b (strain ATCC 35897 / DSM 20650 / CCUG 15529 / CIP 8149 / NCTC 11857 / SLCC 5334 / V8).